The primary structure comprises 234 residues: Transmembrane protein 65 (234 aa).

The transit peptide at 1–55 (MSRLLPLLGSRTARSLRPGPAAAPRLPSWCCCGRGLLALGVPGGPRLLGTHPKKE) directs the protein to the mitochondrion. The Cytoplasmic portion of the chain corresponds to 56–110 (PMEALNTAQGARDFIYSLHSTERSCLLKELHRFESIAIAQEKLEALPPTPGQLRY). The chain crosses the membrane as a helical span at residues 111–131 (VFFHNAIPFVGFGFLDNAIMI). Over 132–138 (VAGTQIE) the chain is Extracellular. The helical transmembrane segment at 139-159 (LSIGIILGISTMAAAALGNLV) threads the bilayer. At 160–203 (SDLAGLGLAGYVEALASRLGLSIPDLTPKQVDMWQTRVSTHLGK) the chain is on the cytoplasmic side. The chain crosses the membrane as a helical span at residues 204-224 (AVGVTIGCILGMFPLIFFGGS). At 225–234 (EEDEKLETTN) the chain is on the extracellular side.

Monomer. Homodimer. Interacts with GJA1. Interacts weakly with DSP. Interacts with SCN1B. Predominantly expressed in the ventricular tissue (at protein level).

It is found in the cell membrane. Its subcellular location is the mitochondrion inner membrane. Its function is as follows. Essential for maintaining proper cardiac intercalated disk (ICD) structure and function as well as cardiac conduction velocity in the heart. Its association with SCN1B is required for stabilizing the perinexus in the ICD and for localization of GJA1 and SCN5A to the ICD. May regulate the function of the gap junction protein GJA1 and may contribute to the stability and proper localization of GJA1 to cardiac intercalated disk thereby regulating gap junction communication. Regulates mitochondrial respiration and mitochondrial DNA copy number maintenance. The polypeptide is Transmembrane protein 65 (Tmem65) (Mus musculus (Mouse)).